Reading from the N-terminus, the 570-residue chain is MVVEQIEVIEHRIIEEGRRPSGGPLLGNTVPFSTIRESRESYEQRADGTIHDRRYEVTGERDVSREPSFLHTSANYGQHIETSPPPVQRYNVSGATNSSFLNTSGDSRVSYPGADRSNDTTVINNYGYDIHEVRTDDGGARIIETHGSGPLRETSRIEHVEETITRPSAMRSSSAAAQRSSSNIFTVPAPAAHVSYRQEFASDNESLARKDSYRAMQSSWDGDEKKMTSTLNSRRFPPQSQTSLVSRETDQHSGKKIGCLKKIRTFYQGVRYAFENSEYTPELLRSLCCILLLLLLLLFLMFIIFNAIFNRYAVSEFLLYPPVCEECRRKNPALVSAALPSSVFVHFFSKHQAHFELRGNQPFKSNSFTAVDFNTGYVAYADHSLTDANGKHFTCFLMPLDRSAIDSIDQLSEAVSESSYEIQSTFGWQEFYQFDPEKIEPMTAKQKFTEEIDDCEGAQWYLLRQTVHARDASCSECYDFCLPDWAVVRKEKYEDESTLGVRRLNCFRLYVPQWSNFRVETDIGGGHWKYPLSSESTKRDKNGEWVHWIPTTNAQGFSRSRKSINNATLV.

Topologically, residues 1–288 (MVVEQIEVIE…YTPELLRSLC (288 aa)) are cytoplasmic. 2 stretches are compositionally biased toward polar residues: residues 93 to 107 (SGATNSSFLNTSGDS) and 228 to 246 (TSTLNSRRFPPQSQTSLVS). Disordered stretches follow at residues 93–116 (SGATNSSFLNTSGDSRVSYPGADR) and 218–248 (SSWDGDEKKMTSTLNSRRFPPQSQTSLVSRE). The chain crosses the membrane as a helical span at residues 289–309 (CILLLLLLLLFLMFIIFNAIF). Topologically, residues 310–570 (NRYAVSEFLL…RKSINNATLV (261 aa)) are extracellular. The BRICHOS domain occupies 369 to 461 (TAVDFNTGYV…IDDCEGAQWY (93 aa)). Cys395 and Cys455 are disulfide-bonded.

It localises to the membrane. The polypeptide is BRICHOS domain-containing protein C09F5.1 (Caenorhabditis elegans).